A 254-amino-acid polypeptide reads, in one-letter code: Protein odd-skipped-related 2 (254 aa).

3 C2H2-type zinc fingers span residues 124–146, 152–174, and 180–202; these read FICK…ERTH, YSCD…KYIH, and FKCE…RATH.

The protein belongs to the Odd C2H2-type zinc-finger protein family.

It localises to the nucleus. Functionally, may function as transcription regulator. Required for morphogenesis and function of the digestive tract. This Caenorhabditis elegans protein is Protein odd-skipped-related 2.